The primary structure comprises 146 residues: Probable calcium-binding protein CML32 (146 aa).

EF-hand domains lie at 1–33, 34–69, 73–108, and 109–144; these read MSVA…FSPS, ITSE…GGEG, DEDI…LGEK, and QTIA…NNKK. Residues Asp11, Asn13, Asp15, Lys17, Glu22, Asp47, Asp49, Asp51, Gln53, Glu58, Asp86, Asp88, Asp90, Lys92, Glu97, Asp122, Asp124, Asp126, and Glu133 each coordinate Ca(2+).

In terms of biological role, potential calcium sensor. The sequence is that of Probable calcium-binding protein CML32 (CML32) from Arabidopsis thaliana (Mouse-ear cress).